The chain runs to 409 residues: Alpha-1-antitrypsin (409 aa).

A signal peptide spans 1-15; it reads LLLAGLCCLLPGSLA. The disordered stretch occupies residues 18–39; sequence PQGDAAQKTDTPPHDQNHPTLN. Residues Asn-61, Asn-98, Asn-136, and Asn-262 are each glycosylated (N-linked (GlcNAc...) asparagine). An RCL region spans residues 364–383; the sequence is GAMFLEAIPMSIPPEVKFNK. Ser-374 is subject to Phosphoserine.

The protein belongs to the serpin family. In terms of assembly, interacts with CELA2A. Interacts with ERGIC3 and LMAN1/ERGIC53. Interacts with PRSS1/Trypsin. Plasma.

The protein resides in the secreted. Functionally, inhibitor of serine proteases. Its primary target is elastase, but it also has a moderate affinity for plasmin and thrombin. Inhibits trypsin, chymotrypsin and plasminogen activator. This is Alpha-1-antitrypsin (SERPINA1) from Papio anubis (Olive baboon).